Here is a 103-residue protein sequence, read N- to C-terminus: Histone H4, minor (103 aa).

The segment covering 1–12 has biased composition (gly residues); the sequence is MAGGKGGKGMGK. The disordered stretch occupies residues 1-29; it reads MAGGKGGKGMGKVGAKRHSRKSNKASIEG. An N6-acetyllysine mark is found at Lys5, Lys8, Lys12, and Lys16. Residues 14–23 are compositionally biased toward basic residues; the sequence is GAKRHSRKSN. Residues 16–21 mediate DNA binding; the sequence is KRHSRK.

It belongs to the histone H4 family. As to quaternary structure, the nucleosome is a histone octamer containing two molecules each of H2A, H2B, H3 and H4 assembled in one H3-H4 heterotetramer and two H2A-H2B heterodimers. The octamer wraps approximately 147 bp of DNA.

Its subcellular location is the nucleus. The protein localises to the chromosome. In terms of biological role, core component of nucleosome. Nucleosomes wrap and compact DNA into chromatin, limiting DNA accessibility to the cellular machineries which require DNA as a template. Histones thereby play a central role in transcription regulation, DNA repair, DNA replication and chromosomal stability. DNA accessibility is regulated via a complex set of post-translational modifications of histones, also called histone code, and nucleosome remodeling. The polypeptide is Histone H4, minor (Tetrahymena pyriformis).